Reading from the N-terminus, the 305-residue chain is MVDKLTHLKQLEAESIHIIREVAAEFDNPVMLYSIGKDSAVMLHLARKAFFPGKLPFPVMHVDTRWKFQEMYTFRDKMVEELGLDLITHVNPDGVAQGINPFTHGSAKHTDIMKTEGLKQALDKHGFDAAFGGARRDEEKSRAKERVYSFRDSKHRWDPKNQRPELWNVYNGNVNKGESIRVFPLSNWTELDIWQYIYLEGIPIVPLYFAAERDVIEKNGTLIMIDDDRILEHLSDEDKARIVKKKVRFRTLGCYPLTGAVESEAETLTDIIQEMLLTRTSERQGRVIDHDGAGSMEDKKRQGYF.

The protein belongs to the PAPS reductase family. CysD subfamily. Heterodimer composed of CysD, the smaller subunit, and CysN.

It carries out the reaction sulfate + ATP + H(+) = adenosine 5'-phosphosulfate + diphosphate. The protein operates within sulfur metabolism; hydrogen sulfide biosynthesis; sulfite from sulfate: step 1/3. With CysN forms the ATP sulfurylase (ATPS) that catalyzes the adenylation of sulfate producing adenosine 5'-phosphosulfate (APS) and diphosphate, the first enzymatic step in sulfur assimilation pathway. APS synthesis involves the formation of a high-energy phosphoric-sulfuric acid anhydride bond driven by GTP hydrolysis by CysN coupled to ATP hydrolysis by CysD. This Pseudomonas fluorescens (strain SBW25) protein is Sulfate adenylyltransferase subunit 2.